Consider the following 479-residue polypeptide: tRNA modification GTPase MnmE (479 aa).

(6S)-5-formyl-5,6,7,8-tetrahydrofolate is bound by residues Arg25, Glu82, and Lys134. The TrmE-type G domain occupies 230–401; the sequence is GLRVVIAGQP…LRAALLARAG (172 aa). Residue Asn240 participates in K(+) binding. GTP contacts are provided by residues 240–245, 259–265, 284–287, 352–355, and 382–384; these read NAGKSS, TPIPGTT, DTAG, NKAD, and SAR. A Mg(2+)-binding site is contributed by Ser244. The K(+) site is built by Thr259, Ile261, and Thr264. Mg(2+) is bound at residue Thr265. Residue Lys479 participates in (6S)-5-formyl-5,6,7,8-tetrahydrofolate binding.

It belongs to the TRAFAC class TrmE-Era-EngA-EngB-Septin-like GTPase superfamily. TrmE GTPase family. Homodimer. Heterotetramer of two MnmE and two MnmG subunits. The cofactor is K(+).

The protein localises to the cytoplasm. Exhibits a very high intrinsic GTPase hydrolysis rate. Involved in the addition of a carboxymethylaminomethyl (cmnm) group at the wobble position (U34) of certain tRNAs, forming tRNA-cmnm(5)s(2)U34. The polypeptide is tRNA modification GTPase MnmE (Leptothrix cholodnii (strain ATCC 51168 / LMG 8142 / SP-6) (Leptothrix discophora (strain SP-6))).